The chain runs to 546 residues: DDB1- and CUL4-associated factor 11 (546 aa).

A compositionally biased stretch (low complexity) spans 1–19; sequence MGSRNSSSAGSGSGDPSEG. A disordered region spans residues 1-40; sequence MGSRNSSSAGSGSGDPSEGLTRRGAGLRRSEEEEEEDEDV. Ser75 carries the post-translational modification Phosphoserine. WD repeat units lie at residues 170–210, 216–258, 263–302, 305–345, 353–392, 435–480, and 481–520; these read SYSQ…RKFK, DVGW…TALD, ERRF…RTLQ, SHED…EDDP, GHQD…SREG, GVLH…KKLT, and NHKA…YFQD. Positions 523–546 are disordered; the sequence is PESEECASAPAPVPRSSTPFSSPQ. Polar residues predominate over residues 537 to 546; the sequence is RSSTPFSSPQ.

Interacts with DDB1 and CUL4A.

It functions in the pathway protein modification; protein ubiquitination. Its function is as follows. May function as a substrate receptor for CUL4-DDB1 E3 ubiquitin-protein ligase complex. The protein is DDB1- and CUL4-associated factor 11 (DCAF11) of Pongo abelii (Sumatran orangutan).